We begin with the raw amino-acid sequence, 220 residues long: Deoxyribose-phosphate aldolase 1 (220 aa).

The Proton donor/acceptor role is filled by Asp89. Residue Lys151 is the Schiff-base intermediate with acetaldehyde of the active site. The active-site Proton donor/acceptor is the Lys180.

It belongs to the DeoC/FbaB aldolase family. DeoC type 1 subfamily.

The protein resides in the cytoplasm. It carries out the reaction 2-deoxy-D-ribose 5-phosphate = D-glyceraldehyde 3-phosphate + acetaldehyde. The protein operates within carbohydrate degradation; 2-deoxy-D-ribose 1-phosphate degradation; D-glyceraldehyde 3-phosphate and acetaldehyde from 2-deoxy-alpha-D-ribose 1-phosphate: step 2/2. In terms of biological role, catalyzes a reversible aldol reaction between acetaldehyde and D-glyceraldehyde 3-phosphate to generate 2-deoxy-D-ribose 5-phosphate. This chain is Deoxyribose-phosphate aldolase 1, found in Mesoplasma florum (strain ATCC 33453 / NBRC 100688 / NCTC 11704 / L1) (Acholeplasma florum).